We begin with the raw amino-acid sequence, 216 residues long: uncharacterized protein (216 aa).

The chain crosses the membrane as a helical span at residues 39-59 (VLPLTFIGSLLILILTIVYYF). Positions 59-108 (FTLSGSVNELKNEISKEKSKKERLLSEIKRLEELKKTLETKKAIYEVVKI) form a coiled coil.

Its subcellular location is the membrane. This is an uncharacterized protein from Aquifex aeolicus (strain VF5).